The following is a 121-amino-acid chain: Prefoldin subunit beta (121 aa).

Belongs to the prefoldin subunit beta family. In terms of assembly, heterohexamer of two alpha and four beta subunits.

It localises to the cytoplasm. In terms of biological role, molecular chaperone capable of stabilizing a range of proteins. Seems to fulfill an ATP-independent, HSP70-like function in archaeal de novo protein folding. This is Prefoldin subunit beta from Caldivirga maquilingensis (strain ATCC 700844 / DSM 13496 / JCM 10307 / IC-167).